We begin with the raw amino-acid sequence, 468 residues long: FAD-linked oxidoreductase hasG (468 aa).

Positions 37-211 (LGKIPAAVVQ…VEATFRAYPW (175 aa)) constitute an FAD-binding PCMH-type domain.

It belongs to the oxygen-dependent FAD-linked oxidoreductase family. It depends on FAD as a cofactor.

The protein operates within secondary metabolite biosynthesis. In terms of biological role, FAD-linked oxidoreductase; part of the gene cluster that mediates the biosynthesis of hexadehydro-astechrome (HAS), a tryptophan-derived iron(III)-complex that acts as a virulence factor in infected mice. Within the pathway, hasG converts the prenyl to a methylbutadienyl side chain. The HAS biosynthesis begins with the synthesis of a tethered Trp-Ala dipeptide by the NRPS hasD. The 7-dimethylallyltryptophan synthase hasE then catalyzes the prenylation of the hasD-tethered tryptophan or the resulting tethered Trp-Ala dipeptide at the C-7 position of the indole moiety. HAS biosynthesis continues via tethered intermediates with the succesive actions of the cytochrome P450 monooxygenase hasH, the O-methyltransferase hasC, and the FAD-linked oxidoreductase hasG. The resulting O-methylated diketopiperazine is then released from hasD. Finally, three O-methylated diketopiperazine molecules assemble in a trimeric complex with Fe(III) to produce hexadehydro-astechrome. This Aspergillus fumigatus (strain CBS 144.89 / FGSC A1163 / CEA10) (Neosartorya fumigata) protein is FAD-linked oxidoreductase hasG.